Consider the following 356-residue polypeptide: D-alanine--D-alanine ligase (356 aa).

The ATP-grasp domain occupies 134–339 (KQLFATRGLP…YSELITDLIN (206 aa)). ATP is bound at residue 167–222 (EGKLTYPVFVKPANLGSSVGISKCTDSETLIHGIEEALQFDRKLVIEQGVNAREVE). Mg(2+) contacts are provided by aspartate 293, glutamate 306, and asparagine 308.

The protein belongs to the D-alanine--D-alanine ligase family. Mg(2+) serves as cofactor. The cofactor is Mn(2+).

Its subcellular location is the cytoplasm. It catalyses the reaction 2 D-alanine + ATP = D-alanyl-D-alanine + ADP + phosphate + H(+). It functions in the pathway cell wall biogenesis; peptidoglycan biosynthesis. In terms of biological role, cell wall formation. The chain is D-alanine--D-alanine ligase from Macrococcus caseolyticus (strain JCSC5402) (Macrococcoides caseolyticum).